Reading from the N-terminus, the 352-residue chain is Histidinol-phosphate aminotransferase (352 aa).

The residue at position 221 (Lys-221) is an N6-(pyridoxal phosphate)lysine.

It belongs to the class-II pyridoxal-phosphate-dependent aminotransferase family. Histidinol-phosphate aminotransferase subfamily. In terms of assembly, homodimer. The cofactor is pyridoxal 5'-phosphate.

The catalysed reaction is L-histidinol phosphate + 2-oxoglutarate = 3-(imidazol-4-yl)-2-oxopropyl phosphate + L-glutamate. It participates in amino-acid biosynthesis; L-histidine biosynthesis; L-histidine from 5-phospho-alpha-D-ribose 1-diphosphate: step 7/9. The protein is Histidinol-phosphate aminotransferase of Staphylococcus aureus (strain bovine RF122 / ET3-1).